The chain runs to 529 residues: DNA polymerase lambda (529 aa).

A BRCT domain is found at 14-109 (DPEGMFAGMV…EKANEDLYVL (96 aa)). The interval 119-199 (PKKSLPAISG…ESTSVYKPPD (81 aa)) is disordered. A compositionally biased stretch (polar residues) spans 153–175 (SHSNTQGSPDSPTSCSVPSTSAS). Low complexity predominate over residues 182 to 193 (ETPTSPQSESTS). The DNA-binding stretch occupies residues 213–227 (NIYRALGEDRRSFSY). The active site involves His260. The DNA-binding stretch occupies residues 295–298 (GPAT). DCTP-binding positions include Arg336, 367–370 (SYRR), and 376–379 (GDLD). Residues 370 to 379 (RGKATCGDLD) form an involved in primer binding region. Residues Asp377, Asp379, and Asp444 each coordinate Mn(2+). A DNA-binding region spans residues 418–459 (EEGTDSGVDTYFGLCTYPGQELRRRIDFKVYPRDIYSFGLIA). A dCTP-binding site is contributed by Asn467.

This sequence belongs to the DNA polymerase type-X family. As to quaternary structure, interacts with the DNA repair proteins XRCC4 and LIG4. Interacts with HSP90-1. It depends on Mn(2+) as a cofactor.

The protein resides in the nucleus. It carries out the reaction DNA(n) + a 2'-deoxyribonucleoside 5'-triphosphate = DNA(n+1) + diphosphate. Repair polymerase involved in base excision repair (BER) and responsible for repair of lesions that give rise to abasic (AP) sites in DNA. Has both DNA polymerase and terminal transferase activities. Has a 5'-deoxyribose-5-phosphate lyase (dRP lyase) activity. Involved in the repair of transposon-induced DNA double strand breaks (DSBs). Involved in repair of UV-B-mediated DNA damage during seedling development through an excision repair mechanism. Involved the repair of DSBs induced by high salinity and DNA cross-linking agent. Functions via the DNA non-homologous end joining (NHEJ) pathway. In Arabidopsis thaliana (Mouse-ear cress), this protein is DNA polymerase lambda.